The sequence spans 108 residues: UPF0145 protein HDEF_1024 (108 aa).

It belongs to the UPF0145 family.

This Hamiltonella defensa subsp. Acyrthosiphon pisum (strain 5AT) protein is UPF0145 protein HDEF_1024.